The following is a 214-amino-acid chain: Probable transaldolase (214 aa).

Catalysis depends on Lys83, which acts as the Schiff-base intermediate with substrate.

It belongs to the transaldolase family. Type 3B subfamily.

Its subcellular location is the cytoplasm. The catalysed reaction is D-sedoheptulose 7-phosphate + D-glyceraldehyde 3-phosphate = D-erythrose 4-phosphate + beta-D-fructose 6-phosphate. It participates in carbohydrate degradation; pentose phosphate pathway; D-glyceraldehyde 3-phosphate and beta-D-fructose 6-phosphate from D-ribose 5-phosphate and D-xylulose 5-phosphate (non-oxidative stage): step 2/3. Transaldolase is important for the balance of metabolites in the pentose-phosphate pathway. The sequence is that of Probable transaldolase from Geotalea daltonii (strain DSM 22248 / JCM 15807 / FRC-32) (Geobacter daltonii).